The chain runs to 650 residues: DNA gyrase subunit B (650 aa).

The region spanning 429–543 is the Toprim domain; the sequence is NELFIVEGDS…AGYVYIAQPP (115 aa). Mg(2+) is bound by residues glutamate 435, aspartate 508, and aspartate 510.

This sequence belongs to the type II topoisomerase GyrB family. In terms of assembly, heterotetramer, composed of two GyrA and two GyrB chains. In the heterotetramer, GyrA contains the active site tyrosine that forms a transient covalent intermediate with DNA, while GyrB binds cofactors and catalyzes ATP hydrolysis. Mg(2+) is required as a cofactor. Requires Mn(2+) as cofactor. The cofactor is Ca(2+).

It localises to the cytoplasm. The enzyme catalyses ATP-dependent breakage, passage and rejoining of double-stranded DNA.. In terms of biological role, a type II topoisomerase that negatively supercoils closed circular double-stranded (ds) DNA in an ATP-dependent manner to modulate DNA topology and maintain chromosomes in an underwound state. Negative supercoiling favors strand separation, and DNA replication, transcription, recombination and repair, all of which involve strand separation. Also able to catalyze the interconversion of other topological isomers of dsDNA rings, including catenanes and knotted rings. Type II topoisomerases break and join 2 DNA strands simultaneously in an ATP-dependent manner. In Streptococcus pyogenes serotype M3 (strain ATCC BAA-595 / MGAS315), this protein is DNA gyrase subunit B.